The chain runs to 264 residues: DNA-binding HTH-type transcriptional repressor TrmBL2 (264 aa).

Positions 81–113 (LEKFIEEWQERVKEELEAKKKAKEELIELMKPL) form a coiled coil.

It belongs to the transcriptional regulator TrmB family.

The protein localises to the cytoplasm. Its subcellular location is the chromosome. In terms of biological role, an abundant chromosomal protein that seems to be involved in both genome architecture and transcription repression. Incubation with DNA in vitro gives fibrous structures 14.2 +/- 2.1 nm in thickness (naked DNA is 1.83 +/- 0.37 nm); does not significantly compact DNA. Binds to both coding and non-coding regions; binding within gene promoters correlates with decreased transcript levels, while binding within coding regions does not. The sequence is that of DNA-binding HTH-type transcriptional repressor TrmBL2 from Thermococcus kodakarensis (strain ATCC BAA-918 / JCM 12380 / KOD1) (Pyrococcus kodakaraensis (strain KOD1)).